We begin with the raw amino-acid sequence, 203 residues long: uncharacterized protein (203 aa).

This is an uncharacterized protein from Pasteurella multocida (strain Pm70).